Reading from the N-terminus, the 213-residue chain is Redox-sensing transcriptional repressor Rex (213 aa).

Positions 16-55 (IYYRYLRLLSNSGKNRVSSTELAEAVKVDSATIRRDFSYF) form a DNA-binding region, H-T-H motif. 90 to 95 (GVGNLG) is a binding site for NAD(+).

Belongs to the transcriptional regulatory Rex family. Homodimer.

The protein localises to the cytoplasm. In terms of biological role, modulates transcription in response to changes in cellular NADH/NAD(+) redox state. This is Redox-sensing transcriptional repressor Rex from Ligilactobacillus salivarius (strain UCC118) (Lactobacillus salivarius).